We begin with the raw amino-acid sequence, 410 residues long: Protein king tubby 2 (410 aa).

A compositionally biased stretch (polar residues) spans 48–72 (SPNNPDQILTSTGNASITTTPTSPY). 2 disordered regions span residues 48-109 (SPNN…STRH) and 121-159 (ISPALMNNNGGSHHDSSSGKSVEHSSPQASGHNDTEGDV). The segment covering 132-143 (SHHDSSSGKSVE) has biased composition (basic and acidic residues).

It belongs to the TUB family.

It localises to the cytoplasm. Its subcellular location is the nucleus. This chain is Protein king tubby 2 (king-tubby2), found in Aedes aegypti (Yellowfever mosquito).